The sequence spans 137 residues: Ribosome-binding factor A (137 aa).

It belongs to the RbfA family. As to quaternary structure, monomer. Binds 30S ribosomal subunits, but not 50S ribosomal subunits or 70S ribosomes.

Its subcellular location is the cytoplasm. Functionally, one of several proteins that assist in the late maturation steps of the functional core of the 30S ribosomal subunit. Associates with free 30S ribosomal subunits (but not with 30S subunits that are part of 70S ribosomes or polysomes). Required for efficient processing of 16S rRNA. May interact with the 5'-terminal helix region of 16S rRNA. The polypeptide is Ribosome-binding factor A (Rhodopseudomonas palustris (strain BisB18)).